The primary structure comprises 239 residues: NADH-quinone oxidoreductase chain 2 (239 aa).

[2Fe-2S] cluster is bound by residues C96, C101, C137, and C141.

It belongs to the complex I 24 kDa subunit family. As to quaternary structure, NDH-1 is composed of at least 14 different subunits, Nqo1 to Nqo14. The complex has a L-shaped structure, with the hydrophobic arm (subunits Nqo7, Nqo8, Nqo10 to Nqo14) embedded in the inner membrane and the hydrophilic peripheral arm (subunits Nqo1 to Nqo6, Nqo9) protruding into the bacterial cytoplasm. The hydrophilic domain contains all the redox centers. [2Fe-2S] cluster serves as cofactor.

It is found in the cell inner membrane. It catalyses the reaction a quinone + NADH + 5 H(+)(in) = a quinol + NAD(+) + 4 H(+)(out). NDH-1 shuttles electrons from NADH, via FMN and iron-sulfur (Fe-S) centers, to quinones in the respiratory chain. The immediate electron acceptor for the enzyme in this species is believed to be ubiquinone. Couples the redox reaction to proton translocation (for every two electrons transferred, four hydrogen ions are translocated across the cytoplasmic membrane), and thus conserves the redox energy in a proton gradient. The polypeptide is NADH-quinone oxidoreductase chain 2 (nqo2) (Paracoccus denitrificans).